The following is a 111-amino-acid chain: Dynein light chain Tctex-type (111 aa).

Belongs to the dynein light chain Tctex-type family.

It is found in the cytoplasm. It localises to the cytoskeleton. Functionally, acts as a non-catalytic accessory component of a dynein complex. This is Dynein light chain Tctex-type (dlc1) from Schizosaccharomyces pombe (strain 972 / ATCC 24843) (Fission yeast).